A 107-amino-acid chain; its full sequence is U1-lycotoxin-Ls1b (107 aa).

Positions 1-20 are cleaved as a signal peptide; sequence MMKALVVVALLVTLISYSSS. Positions 21–41 are excised as a propeptide; it reads EGIDDLEADELLSLMANEQTR. 4 disulfides stabilise this stretch: C44–C59, C51–C68, C58–C86, and C70–C84.

It belongs to the neurotoxin 19 (CSTX) family. 04 (U1-Lctx) subfamily. As to expression, expressed by the venom gland.

It is found in the secreted. The chain is U1-lycotoxin-Ls1b from Lycosa singoriensis (Wolf spider).